The chain runs to 249 residues: Triosephosphate isomerase (249 aa).

A substrate-binding site is contributed by 9–11 (NWK). The active-site Electrophile is the histidine 94. The active-site Proton acceptor is glutamate 166. Substrate contacts are provided by residues glycine 172, serine 211, and 232–233 (GG).

Belongs to the triosephosphate isomerase family. Homodimer.

It is found in the cytoplasm. It carries out the reaction D-glyceraldehyde 3-phosphate = dihydroxyacetone phosphate. It functions in the pathway carbohydrate biosynthesis; gluconeogenesis. The protein operates within carbohydrate degradation; glycolysis; D-glyceraldehyde 3-phosphate from glycerone phosphate: step 1/1. In terms of biological role, involved in the gluconeogenesis. Catalyzes stereospecifically the conversion of dihydroxyacetone phosphate (DHAP) to D-glyceraldehyde-3-phosphate (G3P). This chain is Triosephosphate isomerase, found in Dechloromonas aromatica (strain RCB).